A 659-amino-acid chain; its full sequence is MGEFKIQSKFKPTGDQPKAIDTLVQSIENGNRGQTLLGVTGSGKTFTMANIIERTQKPTLILAHNKTLAAQLCAEFKEFFPDNIVEYFVSYYDYYQPEAYVPQTDTFIEKDASINDEIDKLRHSATSALLERRDVIIVASVSCIYGLGNPEEYKKLTISLRPGMIKDRDEVIKKLIEIQYERNDIDFARGTFRVRGDNLDIIPSSSSSKGIRIEFFGDEIDRIREFDVLTGNIIGERQHVSITPASHFAASEETLEKSISIIEDELEDRLKVLTAEDKILEAQRLKQRTNYDIEMIREMGYCQGIENYSRILDGRMPGTPPQTLLDYFPEDFLMFIDESHVTLPQVRAMYAGDRSRKTSLVEFGFRLPCAFDNRPLKFSEFESKINQVVFVSATPGEYELDHSEIVAEQIIRPTGLLDPVIEIRPIKGQIDDLYGEIQRTVQRGFRVLITTLTKRMAEDLTKYLKDLNVKATYMHSDIDTLERMKIIRELRLGEVDVLIGINLLREGLDIPEVALVAILDADKEGFLRSETSLIQTIGRAARNSESKVIMYADNITKSMDKSIKETERRRVIQMEYNEEHNITPTTVIKGVRDIIEATKVSEEKENYESEVKKAAKKDIPIEKLIEQYEEEMKEAAKNLQFERAAELRDIIKDLKENSK.

Residues 25-182 (QSIENGNRGQ…KKLIEIQYER (158 aa)) enclose the Helicase ATP-binding domain. Position 38-45 (38-45 (GVTGSGKT)) interacts with ATP. The short motif at 91 to 114 (YYDYYQPEAYVPQTDTFIEKDASI) is the Beta-hairpin element. Residues 429-582 (QIDDLYGEIQ…QMEYNEEHNI (154 aa)) enclose the Helicase C-terminal domain. Residues 622-657 (EKLIEQYEEEMKEAAKNLQFERAAELRDIIKDLKEN) enclose the UVR domain.

It belongs to the UvrB family. As to quaternary structure, forms a heterotetramer with UvrA during the search for lesions. Interacts with UvrC in an incision complex.

The protein resides in the cytoplasm. Functionally, the UvrABC repair system catalyzes the recognition and processing of DNA lesions. A damage recognition complex composed of 2 UvrA and 2 UvrB subunits scans DNA for abnormalities. Upon binding of the UvrA(2)B(2) complex to a putative damaged site, the DNA wraps around one UvrB monomer. DNA wrap is dependent on ATP binding by UvrB and probably causes local melting of the DNA helix, facilitating insertion of UvrB beta-hairpin between the DNA strands. Then UvrB probes one DNA strand for the presence of a lesion. If a lesion is found the UvrA subunits dissociate and the UvrB-DNA preincision complex is formed. This complex is subsequently bound by UvrC and the second UvrB is released. If no lesion is found, the DNA wraps around the other UvrB subunit that will check the other stand for damage. The chain is UvrABC system protein B from Clostridium perfringens (strain SM101 / Type A).